Consider the following 508-residue polypeptide: Photosystem II CP47 reaction center protein (508 aa).

Transmembrane regions (helical) follow at residues 21–36, 101–115, 140–156, 203–218, 237–252, and 457–472; these read AVHL…WAGS, IVLS…IWHW, GIHL…FGAF, IAAG…FHLS, VLSS…AFVV, and CFAL…HGSR.

The protein belongs to the PsbB/PsbC family. PsbB subfamily. In terms of assembly, PSII is composed of 1 copy each of membrane proteins PsbA, PsbB, PsbC, PsbD, PsbE, PsbF, PsbH, PsbI, PsbJ, PsbK, PsbL, PsbM, PsbT, PsbX, PsbY, PsbZ, Psb30/Ycf12, at least 3 peripheral proteins of the oxygen-evolving complex and a large number of cofactors. It forms dimeric complexes. Binds multiple chlorophylls. PSII binds additional chlorophylls, carotenoids and specific lipids. is required as a cofactor.

It is found in the plastid. The protein resides in the chloroplast thylakoid membrane. In terms of biological role, one of the components of the core complex of photosystem II (PSII). It binds chlorophyll and helps catalyze the primary light-induced photochemical processes of PSII. PSII is a light-driven water:plastoquinone oxidoreductase, using light energy to abstract electrons from H(2)O, generating O(2) and a proton gradient subsequently used for ATP formation. The chain is Photosystem II CP47 reaction center protein from Zygnema circumcarinatum (Green alga).